Consider the following 117-residue polypeptide: Calcitonin receptor-stimulating peptide 2 (117 aa).

Positions 1-25 (MGFWKFPPFLVLSILVLYQAGMFHT) are cleaved as a signal peptide. Residues 26-79 (APVRLPLESSFDSATLTEEEVSLLLVAMVKDYVQMKATVLEQESEDFSITAQEK) constitute a propeptide that is removed on maturation. A disulfide bond links Cys81 and Cys86.

It belongs to the calcitonin family. As to expression, mainly expressed in the thyroid gland and CNS. Found in the nerve cells of the cerebrum, hippocampus, hypothalamus, pons/midbrain and thalamus. Also detected in the glia-like cells of pons/midbrain and in meninx of tactus opticus.

Its subcellular location is the secreted. This chain is Calcitonin receptor-stimulating peptide 2 (CRSP2), found in Sus scrofa (Pig).